Here is a 261-residue protein sequence, read N- to C-terminus: Monensin polyketide synthase putative ketoacyl reductase (261 aa).

10 to 34 (LVTGATSGIGLATARLLAAQGHLVF) provides a ligand contact to NAD(+). Residue Ser144 coordinates substrate. The Proton acceptor role is filled by Tyr157.

This sequence belongs to the short-chain dehydrogenases/reductases (SDR) family.

The protein operates within antifungal biosynthesis; monensin biosynthesis. This Streptomyces virginiae (Streptomyces cinnamonensis) protein is Monensin polyketide synthase putative ketoacyl reductase.